The primary structure comprises 231 residues: U1 small nuclear ribonucleoprotein C (231 aa).

Residues 4 to 36 form a Matrin-type zinc finger; that stretch reads YYCEYCHSYLTHDTLSVRKSHLVGKNHLRITAD. Positions 49–61 are enriched in basic residues; sequence HNHKRRHIGKRGR. Disordered stretches follow at residues 49 to 71, 137 to 177, and 205 to 231; these read HNHKRRHIGKRGRKERENSSQNE, PQRA…LEPP, and ESKKRMHSDGIRKPSSANGYKRRRYGN.

The protein belongs to the U1 small nuclear ribonucleoprotein C family. U1 snRNP is composed of the 7 core Sm proteins SMB1, SMD1, SMD2, SMD3, SME1, SMX3 and SMX2 (Sm proteins B, D1, D2, D3, E, F and G, respectively) that assemble in a heptameric protein ring on the Sm site of the small nuclear RNA to form the core snRNP, and at least 10 U1 snRNP-specific proteins SNP1/U1-70K, MUD1/U1-A, YHC1/U1-C, LUC7, NAM8, PRP39, PRP40, PRP42, SNU56 and SNU71. YHC1/U1-C interacts with U1 snRNA and the 5' splice-site region of the pre-mRNA.

It localises to the nucleus. Component of the spliceosomal U1 snRNP, which is essential for recognition of the pre-mRNA 5' splice-site and the subsequent assembly of the spliceosome. YHC1/U1-C is directly involved in initial 5' splice-site recognition for both constitutive and regulated alternative splicing. The interaction with the 5' splice-site seems to precede base-pairing between the pre-mRNA and the U1 snRNA. Stimulates commitment or early (E) complex formation by stabilizing the base pairing of the 5' end of the U1 snRNA and the 5' splice-site region. This Saccharomyces cerevisiae (strain ATCC 204508 / S288c) (Baker's yeast) protein is U1 small nuclear ribonucleoprotein C.